The primary structure comprises 507 residues: ATP synthase subunit alpha, chloroplastic (507 aa).

Position 170-177 (170-177 (GDRQTGKT)) interacts with ATP. Threonine 257 is subject to Phosphothreonine.

It belongs to the ATPase alpha/beta chains family. F-type ATPases have 2 components, CF(1) - the catalytic core - and CF(0) - the membrane proton channel. CF(1) has five subunits: alpha(3), beta(3), gamma(1), delta(1), epsilon(1). CF(0) has four main subunits: a, b, b' and c.

The protein resides in the plastid. It is found in the chloroplast thylakoid membrane. It catalyses the reaction ATP + H2O + 4 H(+)(in) = ADP + phosphate + 5 H(+)(out). Its function is as follows. Produces ATP from ADP in the presence of a proton gradient across the membrane. The alpha chain is a regulatory subunit. The sequence is that of ATP synthase subunit alpha, chloroplastic from Crucihimalaya wallichii (Rock-cress).